The sequence spans 339 residues: UDP-N-acetylenolpyruvoylglucosamine reductase (339 aa).

The FAD-binding PCMH-type domain occupies 16–188 (GIAATARYYS…LQVTLRLNKQ (173 aa)). Arg164 is a catalytic residue. Ser238 acts as the Proton donor in catalysis. The active site involves Glu334.

The protein belongs to the MurB family. FAD is required as a cofactor.

It is found in the cytoplasm. The enzyme catalyses UDP-N-acetyl-alpha-D-muramate + NADP(+) = UDP-N-acetyl-3-O-(1-carboxyvinyl)-alpha-D-glucosamine + NADPH + H(+). It participates in cell wall biogenesis; peptidoglycan biosynthesis. Functionally, cell wall formation. This chain is UDP-N-acetylenolpyruvoylglucosamine reductase, found in Amoebophilus asiaticus (strain 5a2).